A 53-amino-acid polypeptide reads, in one-letter code: Light-harvesting protein B-800/850 alpha chain (53 aa).

At 1-14 (MNQGKIWTVVNPSV) the chain is on the cytoplasmic side. The helical transmembrane segment at 15-35 (GLPLLLGSVTVIAILVHAAVL) threads the bilayer. His31 provides a ligand contact to a bacteriochlorophyll. Residues 36 to 53 (SHTTWFPAYWQGGLKKAA) are Periplasmic-facing.

Belongs to the antenna complex alpha subunit family. In terms of assembly, the core complex is formed by different alpha and beta chains, binding bacteriochlorophyll molecules, and arranged most probably in tetrameric structures disposed around the reaction center. The non-pigmented gamma chains may constitute additional components.

The protein resides in the cell inner membrane. Its function is as follows. Antenna complexes are light-harvesting systems, which transfer the excitation energy to the reaction centers. The sequence is that of Light-harvesting protein B-800/850 alpha chain from Rhodoblastus acidophilus (Rhodopseudomonas acidophila).